Consider the following 275-residue polypeptide: Two-component response regulator PprB (275 aa).

The 119-residue stretch at 10 to 128 (SVLIIDDEPQ…ELLHGLERLE (119 aa)) folds into the Response regulatory domain. Asp-60 carries the post-translational modification 4-aspartylphosphate. The interval 173–205 (SQPSALRSEDSQPSAPPAPVAESQVSPSNPLFG) is disordered. An HTH luxR-type domain is found at 200-265 (SNPLFGKLSP…QLALALSPAA (66 aa)). The segment at residues 224–243 (NYQIAYELGITENTVKLYVS) is a DNA-binding region (H-T-H motif).

Phosphorylated by PprA.

In terms of biological role, member of the two-component regulatory system PprA/PprB involved in biofilm formation by controlling the expression of many related genes including type IVb pili major subunit flp pilin, adhesin bapA or cupE fimbriae. Functions as a transcription regulator by direct binding to promoter regions. Negatively regulates its own transcription. The polypeptide is Two-component response regulator PprB (Pseudomonas aeruginosa (strain ATCC 15692 / DSM 22644 / CIP 104116 / JCM 14847 / LMG 12228 / 1C / PRS 101 / PAO1)).